The following is a 261-amino-acid chain: 14-3-3 protein 8 (261 aa).

Positions 237–261 are disordered; sequence DIPEDGEEAPKGDAANKVGAGEDAE.

This sequence belongs to the 14-3-3 family. In terms of assembly, homodimer.

The polypeptide is 14-3-3 protein 8 (TFT8) (Solanum lycopersicum (Tomato)).